A 601-amino-acid chain; its full sequence is Membrane protein insertase YidC (601 aa).

The helical transmembrane segment at 10 to 30 threads the bilayer; that stretch reads ISISLVILVLFQVIASYVLPP. The disordered stretch occupies residues 34–63; the sequence is APPHPATQTAQTQPVSGQPAPGVPAPSAVP. The span at 39–53 shows a compositional bias: low complexity; the sequence is ATQTAQTQPVSGQPA. Pro residues predominate over residues 54 to 63; the sequence is PGVPAPSAVP. The next 4 helical transmembrane spans lie at 382 to 404, 455 to 475, 510 to 530, and 549 to 569; these read FGNM…FPLV, LPML…FISI, ALSP…TMWG, and FMPV…VLYY.

It belongs to the OXA1/ALB3/YidC family. Type 1 subfamily. As to quaternary structure, interacts with the Sec translocase complex via SecD. Specifically interacts with transmembrane segments of nascent integral membrane proteins during membrane integration.

It localises to the cell inner membrane. In terms of biological role, required for the insertion and/or proper folding and/or complex formation of integral membrane proteins into the membrane. Involved in integration of membrane proteins that insert both dependently and independently of the Sec translocase complex, as well as at least some lipoproteins. Aids folding of multispanning membrane proteins. The protein is Membrane protein insertase YidC of Acidiphilium cryptum (strain JF-5).